A 262-amino-acid chain; its full sequence is Tryptophan synthase alpha chain (262 aa).

Active-site proton acceptor residues include glutamate 48 and aspartate 59.

It belongs to the TrpA family. As to quaternary structure, tetramer of two alpha and two beta chains.

The catalysed reaction is (1S,2R)-1-C-(indol-3-yl)glycerol 3-phosphate + L-serine = D-glyceraldehyde 3-phosphate + L-tryptophan + H2O. It functions in the pathway amino-acid biosynthesis; L-tryptophan biosynthesis; L-tryptophan from chorismate: step 5/5. Its function is as follows. The alpha subunit is responsible for the aldol cleavage of indoleglycerol phosphate to indole and glyceraldehyde 3-phosphate. The protein is Tryptophan synthase alpha chain of Helicobacter pylori (strain P12).